Reading from the N-terminus, the 378-residue chain is Tetraacyldisaccharide 4'-kinase (378 aa).

63–70 serves as a coordination point for ATP; that stretch reads AVGGAGKT.

It belongs to the LpxK family.

It catalyses the reaction a lipid A disaccharide + ATP = a lipid IVA + ADP + H(+). The protein operates within glycolipid biosynthesis; lipid IV(A) biosynthesis; lipid IV(A) from (3R)-3-hydroxytetradecanoyl-[acyl-carrier-protein] and UDP-N-acetyl-alpha-D-glucosamine: step 6/6. Functionally, transfers the gamma-phosphate of ATP to the 4'-position of a tetraacyldisaccharide 1-phosphate intermediate (termed DS-1-P) to form tetraacyldisaccharide 1,4'-bis-phosphate (lipid IVA). In Anaeromyxobacter dehalogenans (strain 2CP-C), this protein is Tetraacyldisaccharide 4'-kinase.